Here is a 300-residue protein sequence, read N- to C-terminus: 33 kDa chaperonin (300 aa).

2 disulfides stabilise this stretch: cysteine 235/cysteine 237 and cysteine 269/cysteine 272.

It belongs to the HSP33 family. Under oxidizing conditions two disulfide bonds are formed involving the reactive cysteines. Under reducing conditions zinc is bound to the reactive cysteines and the protein is inactive.

It is found in the cytoplasm. In terms of biological role, redox regulated molecular chaperone. Protects both thermally unfolding and oxidatively damaged proteins from irreversible aggregation. Plays an important role in the bacterial defense system toward oxidative stress. This is 33 kDa chaperonin from Pseudomonas syringae pv. syringae (strain B728a).